The following is a 68-amino-acid chain: Large ribosomal subunit protein uL29 (68 aa).

The protein belongs to the universal ribosomal protein uL29 family.

The chain is Large ribosomal subunit protein uL29 from Bradyrhizobium diazoefficiens (strain JCM 10833 / BCRC 13528 / IAM 13628 / NBRC 14792 / USDA 110).